The chain runs to 209 residues: Small ribosomal subunit protein uS4 (209 aa).

Positions 9, 12, 26, and 31 each coordinate Zn(2+). The C4-type zinc finger occupies 9 to 31; that stretch reads CKLCRREGMKLYLKGERCYTDKC. The region spanning 98 to 161 is the S4 RNA-binding domain; it reads ARLDNVVYRM…RDLEVIKKAI (64 aa).

The protein belongs to the universal ribosomal protein uS4 family. In terms of assembly, part of the 30S ribosomal subunit. Contacts protein S5. The interaction surface between S4 and S5 is involved in control of translational fidelity. The cofactor is Zn(2+).

Its function is as follows. One of the primary rRNA binding proteins, it binds directly to 16S rRNA where it nucleates assembly of the body of the 30S subunit. In terms of biological role, with S5 and S12 plays an important role in translational accuracy. In Thermotoga maritima (strain ATCC 43589 / DSM 3109 / JCM 10099 / NBRC 100826 / MSB8), this protein is Small ribosomal subunit protein uS4 (rpsD).